The following is a 298-amino-acid chain: Dihydrodipicolinate reductase-like protein CRR1, chloroplastic (298 aa).

Residues 1–25 (MAAVNCHFFQLSRHLKPSRPSFSCS) constitute a chloroplast transit peptide. Position 160–163 (160–163 (APTL)) interacts with NAD(+).

This sequence belongs to the DapB family. As to expression, expressed specifically in leaves.

The protein resides in the plastid. It localises to the chloroplast stroma. Dihydrodipicolinate reductase (DHPR)-like protein that may not function as DHPR in lysine biosynthesis. Required for both formation and activity of the chloroplast NAD(P)H dehydrogenase (NDH) complex of the photosynthetic electron transport chain. May function in assembly or stabilization of the NDH complex. The protein is Dihydrodipicolinate reductase-like protein CRR1, chloroplastic of Arabidopsis thaliana (Mouse-ear cress).